The sequence spans 37 residues: Photosystem II reaction center protein T (37 aa).

The helical transmembrane segment at 3–23 threads the bilayer; that stretch reads ALVYTFLLVSTLGIIFFAIFF.

Belongs to the PsbT family. As to quaternary structure, PSII is composed of 1 copy each of membrane proteins PsbA, PsbB, PsbC, PsbD, PsbE, PsbF, PsbH, PsbI, PsbJ, PsbK, PsbL, PsbM, PsbT, PsbY, PsbZ, Psb30/Ycf12, at least 3 peripheral proteins of the oxygen-evolving complex and a large number of cofactors. It forms dimeric complexes.

It localises to the plastid. It is found in the chloroplast thylakoid membrane. In terms of biological role, found at the monomer-monomer interface of the photosystem II (PS II) dimer, plays a role in assembly and dimerization of PSII. PSII is a light-driven water plastoquinone oxidoreductase, using light energy to abstract electrons from H(2)O, generating a proton gradient subsequently used for ATP formation. The sequence is that of Photosystem II reaction center protein T from Cucumis sativus (Cucumber).